The primary structure comprises 512 residues: Histidine ammonia-lyase (512 aa).

Positions 144-146 (ASG) form a cross-link, 5-imidazolinone (Ala-Gly). Ser-145 bears the 2,3-didehydroalanine (Ser) mark.

This sequence belongs to the PAL/histidase family. In terms of processing, contains an active site 4-methylidene-imidazol-5-one (MIO), which is formed autocatalytically by cyclization and dehydration of residues Ala-Ser-Gly.

The protein localises to the cytoplasm. The catalysed reaction is L-histidine = trans-urocanate + NH4(+). Its pathway is amino-acid degradation; L-histidine degradation into L-glutamate; N-formimidoyl-L-glutamate from L-histidine: step 1/3. The chain is Histidine ammonia-lyase from Desulfotalea psychrophila (strain LSv54 / DSM 12343).